The sequence spans 307 residues: Probable transposase for transposon Tn903 (307 aa).

Required for transposition of transposon Tn903. The chain is Probable transposase for transposon Tn903 from Escherichia coli.